The following is a 141-amino-acid chain: Large ribosomal subunit protein uL11 (141 aa).

Belongs to the universal ribosomal protein uL11 family. In terms of assembly, part of the ribosomal stalk of the 50S ribosomal subunit. Interacts with L10 and the large rRNA to form the base of the stalk. L10 forms an elongated spine to which L12 dimers bind in a sequential fashion forming a multimeric L10(L12)X complex. Post-translationally, one or more lysine residues are methylated.

In terms of biological role, forms part of the ribosomal stalk which helps the ribosome interact with GTP-bound translation factors. The sequence is that of Large ribosomal subunit protein uL11 from Cyanothece sp. (strain PCC 7425 / ATCC 29141).